We begin with the raw amino-acid sequence, 187 residues long: uncharacterized protein (187 aa).

Transmembrane regions (helical) follow at residues isoleucine 29–isoleucine 50, phenylalanine 70–tyrosine 92, isoleucine 128–arginine 147, and leucine 154–leucine 176.

The protein resides in the cell membrane. This is an uncharacterized protein from Archaeoglobus fulgidus (strain ATCC 49558 / DSM 4304 / JCM 9628 / NBRC 100126 / VC-16).